We begin with the raw amino-acid sequence, 184 residues long: Large ribosomal subunit protein uL6 (184 aa).

The protein belongs to the universal ribosomal protein uL6 family. As to quaternary structure, part of the 50S ribosomal subunit.

Functionally, this protein binds to the 23S rRNA, and is important in its secondary structure. It is located near the subunit interface in the base of the L7/L12 stalk, and near the tRNA binding site of the peptidyltransferase center. This chain is Large ribosomal subunit protein uL6, found in Onion yellows phytoplasma (strain OY-M).